A 203-amino-acid polypeptide reads, in one-letter code: Shikimate kinase (203 aa).

Gly38–Thr43 provides a ligand contact to ATP. Residue Ser42 coordinates Mg(2+). Positions 60, 84, and 106 each coordinate substrate. Arg144 provides a ligand contact to ATP. Arg163 is a binding site for substrate.

Belongs to the shikimate kinase family. In terms of assembly, monomer. Requires Mg(2+) as cofactor.

It is found in the cytoplasm. The enzyme catalyses shikimate + ATP = 3-phosphoshikimate + ADP + H(+). It functions in the pathway metabolic intermediate biosynthesis; chorismate biosynthesis; chorismate from D-erythrose 4-phosphate and phosphoenolpyruvate: step 5/7. Functionally, catalyzes the specific phosphorylation of the 3-hydroxyl group of shikimic acid using ATP as a cosubstrate. The chain is Shikimate kinase from Rhodopseudomonas palustris (strain ATCC BAA-98 / CGA009).